The primary structure comprises 506 residues: Transcription factor CP2 (506 aa).

In terms of domain architecture, Grh/CP2 DB spans 61–300 (ENKILPFQYV…SPGFNSSHNS (240 aa)). The tract at residues 133–395 (EHQQLEGWRW…LFNALKGRIV (263 aa)) is DNA-binding. 2 disordered regions span residues 238-268 (FKPK…YQPS) and 291-316 (SPGF…QPEP). Residues 241–265 (KGADRKQKTDREKMEKRTPQEKEKY) show a composition bias toward basic and acidic residues. Over residues 291-300 (SPGFNSSHNS) the composition is skewed to polar residues.

This sequence belongs to the grh/CP2 family. CP2 subfamily. As to quaternary structure, component of the SSP (stage selector protein) complex, which appears to be a heteromer of TFCP2 and 2 copies of NFE4.

The protein localises to the nucleus. In terms of biological role, may function as a transcription factor. This is Transcription factor CP2 (tfcp2) from Xenopus laevis (African clawed frog).